The primary structure comprises 151 residues: Arginine repressor (151 aa).

The protein belongs to the ArgR family.

The protein resides in the cytoplasm. It participates in amino-acid biosynthesis; L-arginine biosynthesis [regulation]. Its function is as follows. Regulates arginine biosynthesis genes. In Heliobacterium modesticaldum (strain ATCC 51547 / Ice1), this protein is Arginine repressor.